The following is a 234-amino-acid chain: MRRTLFVLFVVAFCFIGSVIANLSLPPGFSLRKRLPRSLVDILHLRHEQGLRDDTELRNWLSKQQPAMNKMFSSSSRENGSEKPVVSDVLPKNRAINIFASLTRQFEPIESRLNDSSKNITVLAPRNSAIQSLPRKPWENPEDYEKFGGVSAYEGQEGEDRAKQNLQRFVEAHIIPASPWREGEEMETLGGEKLKWIKKGDKIYIQPGNVEVDNIAETVINGELWILNSVLNYR.

Residues methionine 1–alanine 21 form the signal peptide. Residues lysine 83 to leucine 231 enclose the FAS1 domain.

It is found in the vacuole. In Aspergillus fumigatus (strain ATCC MYA-4609 / CBS 101355 / FGSC A1100 / Af293) (Neosartorya fumigata), this protein is FAS1 domain-containing protein AFUA_8G05360.